Here is a 401-residue protein sequence, read N- to C-terminus: L-rhamnonate dehydratase (401 aa).

2 residues coordinate substrate: histidine 29 and arginine 55. Positions 222, 248, and 276 each coordinate Mg(2+). The active-site Proton acceptor is histidine 325. Residue glutamate 345 coordinates substrate.

It belongs to the mandelate racemase/muconate lactonizing enzyme family. RhamD subfamily. As to quaternary structure, homooctamer; tetramer of dimers. Mg(2+) serves as cofactor.

It catalyses the reaction L-rhamnonate = 2-dehydro-3-deoxy-L-rhamnonate + H2O. Catalyzes the dehydration of L-rhamnonate to 2-keto-3-deoxy-L-rhamnonate (KDR). This is L-rhamnonate dehydratase from Salmonella heidelberg (strain SL476).